Consider the following 430-residue polypeptide: D-galactonate transporter (430 aa).

Residues 1–17 (MDIPVNAAKPGRRRYLT) lie on the Cytoplasmic side of the membrane. A helical transmembrane segment spans residues 18-39 (LVMIFITVVICYVDRANLAVAS). Y29 and R32 together coordinate D-galactonate. Residues 40–50 (AHIQEEFGITK) lie on the Periplasmic side of the membrane. Residues 51–74 (AEMGYVFSAFAWLYTLCQIPGGWF) form a helical membrane-spanning segment. A D-galactonate-binding site is contributed by Y64. Over 75–81 (LDRVGSR) the chain is Cytoplasmic. Residues 82–100 (VTYFIAIFGWSVATLFQGF) traverse the membrane as a helical segment. Residues 101–103 (ATG) lie on the Periplasmic side of the membrane. Residues 104–125 (LMSLIGLRAITGIFEAPAFPTN) form a helical membrane-spanning segment. The Cytoplasmic segment spans residues 126 to 141 (NRMVTSWFPEHERASA). Residues 142-164 (VGFYTSGQFVGLAFLTPLLIWIQ) form a helical membrane-spanning segment. Over 165–168 (EMLS) the chain is Periplasmic. Residues 169–190 (WHWVFIVTGGIGIIWSLIWFKV) form a helical membrane-spanning segment. Over 191 to 241 (YQPPRLTKGISKAELDYIRDGGGLVDGDAPVKKEARQPLTAKDWKLVFHRK) the chain is Cytoplasmic. A helical membrane pass occupies residues 242 to 267 (LIGVYLGQFAVASTLWFFLTWFPNYL). Residues 268 to 276 (TQEKGITAL) lie on the Periplasmic side of the membrane. A helical membrane pass occupies residues 277 to 297 (KAGFMTTVPFLAAFVGVLLSG). The Cytoplasmic portion of the chain corresponds to 298–314 (WVADLLVRKGFSLGFAR). A helical transmembrane segment spans residues 315–333 (KTPIICGLLISTCIMGANY). Over 334–336 (TND) the chain is Periplasmic. Residues 337 to 354 (PMMIMCLMALAFFGNGFA) form a helical membrane-spanning segment. The Cytoplasmic portion of the chain corresponds to 355–373 (SITWSLVSSLAPMRLIGLT). Position 358 (W358) interacts with D-galactonate. The chain crosses the membrane as a helical span at residues 374–395 (GGVFNFAGGLGGITVPLVVGYL). Residues 396-400 (AQGYG) are Periplasmic-facing. A helical transmembrane segment spans residues 401–423 (FAPALVYISAVALIGALSYILLV). Residues 424–430 (GDVKRVG) lie on the Cytoplasmic side of the membrane.

It belongs to the major facilitator superfamily. Phthalate permease family.

It localises to the cell inner membrane. It carries out the reaction D-galactonate(in) + H(+)(in) = D-galactonate(out) + H(+)(out). Functionally, involved in D-galactonate metabolism. Catalyzes the proton-dependent uptake of galactonate into the cell. This is D-galactonate transporter (dgoT) from Escherichia coli O6:H1 (strain CFT073 / ATCC 700928 / UPEC).